The following is a 455-amino-acid chain: Ribulose bisphosphate carboxylase large chain (455 aa).

An N6,N6,N6-trimethyllysine modification is found at Lys-5. Substrate is bound by residues Asn-114 and Thr-164. The active-site Proton acceptor is Lys-166. Lys-168 serves as a coordination point for substrate. The Mg(2+) site is built by Lys-192, Asp-194, and Glu-195. Lys-192 carries the post-translational modification N6-carboxylysine. Residue His-285 is the Proton acceptor of the active site. Residues Arg-286, His-318, and Ser-370 each contribute to the substrate site.

This sequence belongs to the RuBisCO large chain family. Type I subfamily. In terms of assembly, heterohexadecamer of 8 large chains and 8 small chains; disulfide-linked. The disulfide link is formed within the large subunit homodimers. The cofactor is Mg(2+). In terms of processing, the disulfide bond which can form in the large chain dimeric partners within the hexadecamer appears to be associated with oxidative stress and protein turnover.

It is found in the plastid. Its subcellular location is the chloroplast. The catalysed reaction is 2 (2R)-3-phosphoglycerate + 2 H(+) = D-ribulose 1,5-bisphosphate + CO2 + H2O. It catalyses the reaction D-ribulose 1,5-bisphosphate + O2 = 2-phosphoglycolate + (2R)-3-phosphoglycerate + 2 H(+). In terms of biological role, ruBisCO catalyzes two reactions: the carboxylation of D-ribulose 1,5-bisphosphate, the primary event in carbon dioxide fixation, as well as the oxidative fragmentation of the pentose substrate in the photorespiration process. Both reactions occur simultaneously and in competition at the same active site. This chain is Ribulose bisphosphate carboxylase large chain, found in Lupinus nanus (Sky lupine).